A 425-amino-acid polypeptide reads, in one-letter code: Type II secretion system protein L (425 aa).

Topologically, residues 1 to 273 (MKIAGKWKRK…DKAWQNTLLP (273 aa)) are cytoplasmic. A helical membrane pass occupies residues 274–290 (WRGVGIAFACYLLLVVA). Residues 291–425 (DAGWAHYQLY…EGRLTLRSQQ (135 aa)) are Periplasmic-facing.

Belongs to the GSP L family. Type II secretion system is composed of four main components: the outer membrane complex, the inner membrane complex, the cytoplasmic secretion ATPase and the periplasm-spanning pseudopilus. Forms homodimers. Interacts with OutM/GspM. Interacts with OutE/GspE and OutF/GspF.

The protein localises to the cell inner membrane. Its function is as follows. Inner membrane component of the type II secretion system required for the energy-dependent secretion of extracellular factors such as proteases and toxins from the periplasm. Plays a role in the complex assembly and recruits OutM resulting in a stable complex in the inner membrane. Provides thus a link between the energy-providing OutE protein in the cytoplasm and the rest of the T2SS machinery. In Pectobacterium carotovorum subsp. carotovorum (Erwinia carotovora subsp. carotovora), this protein is Type II secretion system protein L (outL).